Consider the following 414-residue polypeptide: Probable mannose-1-phosphate guanyltransferase (414 aa).

This sequence belongs to the transferase hexapeptide repeat family.

It is found in the cytoplasm. Its subcellular location is the nucleus. The enzyme catalyses alpha-D-mannose 1-phosphate + GTP + H(+) = GDP-alpha-D-mannose + diphosphate. It participates in nucleotide-sugar biosynthesis; GDP-alpha-D-mannose biosynthesis; GDP-alpha-D-mannose from alpha-D-mannose 1-phosphate (GTP route): step 1/1. Functionally, involved in cell wall synthesis where it is required for glycosylation. This is Probable mannose-1-phosphate guanyltransferase from Schizosaccharomyces pombe (strain 972 / ATCC 24843) (Fission yeast).